Consider the following 67-residue polypeptide: Protein AaeX (67 aa).

A run of 2 helical transmembrane segments spans residues 3–23 (LFPV…KLLL) and 43–63 (FVWH…YLIS).

This sequence belongs to the AaeX family.

Its subcellular location is the cell membrane. This chain is Protein AaeX, found in Salmonella gallinarum (strain 287/91 / NCTC 13346).